Reading from the N-terminus, the 185-residue chain is Ribosome-recycling factor (185 aa).

It belongs to the RRF family.

Its subcellular location is the cytoplasm. In terms of biological role, responsible for the release of ribosomes from messenger RNA at the termination of protein biosynthesis. May increase the efficiency of translation by recycling ribosomes from one round of translation to another. In Corynebacterium jeikeium (strain K411), this protein is Ribosome-recycling factor.